Here is a 385-residue protein sequence, read N- to C-terminus: Putative RNA methyltransferase YpsC (385 aa).

In terms of domain architecture, THUMP spans 44–156 (AICRANLWLR…KDQALITLDS (113 aa)).

This sequence belongs to the methyltransferase superfamily. Interacts with the RNA polymerase core.

This Bacillus subtilis (strain 168) protein is Putative RNA methyltransferase YpsC (ypsC).